The sequence spans 265 residues: NAD kinase 1 (265 aa).

D45 (proton acceptor) is an active-site residue. NAD(+)-binding positions include 45–46 (DG), 122–123 (NE), R148, D150, and A185.

Belongs to the NAD kinase family. A divalent metal cation is required as a cofactor.

The protein resides in the cytoplasm. The enzyme catalyses NAD(+) + ATP = ADP + NADP(+) + H(+). In terms of biological role, involved in the regulation of the intracellular balance of NAD and NADP, and is a key enzyme in the biosynthesis of NADP. Catalyzes specifically the phosphorylation on 2'-hydroxyl of the adenosine moiety of NAD to yield NADP. This chain is NAD kinase 1, found in Bacillus anthracis.